The sequence spans 529 residues: Arginine--tRNA ligase (529 aa).

Residues 113–123 carry the 'HIGH' region motif; it reads ANPTGPLHIGH.

Belongs to the class-I aminoacyl-tRNA synthetase family. As to quaternary structure, monomer.

The protein localises to the cytoplasm. It carries out the reaction tRNA(Arg) + L-arginine + ATP = L-arginyl-tRNA(Arg) + AMP + diphosphate. This Aliarcobacter butzleri (strain RM4018) (Arcobacter butzleri) protein is Arginine--tRNA ligase.